The chain runs to 208 residues: V-type ATP synthase subunit E (208 aa).

It belongs to the V-ATPase E subunit family.

Produces ATP from ADP in the presence of a proton gradient across the membrane. In Chlamydia muridarum (strain MoPn / Nigg), this protein is V-type ATP synthase subunit E (atpE).